Here is a 900-residue protein sequence, read N- to C-terminus: Endoglucanase H (900 aa).

A signal peptide spans 1 to 44 (MKKRLLVSFLVLSIIVGLLSFQSLGNYNSGLKIGAWVGTQPSES). One can recognise a GH26 domain in the interval 45 to 298 (AIKSFQELQG…NSSPEALAAY (254 aa)). Glu-131 serves as the catalytic Proton donor. Glu-244 functions as the Nucleophile in the catalytic mechanism. The tract at residues 300–630 (EAIGAGSSNP…DTEILNALFN (331 aa)) is catalytic. The segment at 303-326 (GAGSSNPTPTPTWTSTPPSSSPKA) is disordered. The segment covering 306–324 (SSNPTPTPTWTSTPPSSSP) has biased composition (low complexity). Glu-460 serves as the catalytic Proton donor. The Nucleophile role is filled by Glu-565. The region spanning 655–900 (AVGEKMLDDF…LLKAISEIPI (246 aa)) is the CBM11 domain. Residues 827-900 (PSIKHGDLNF…LLKAISEIPI (74 aa)) form the Dockerin domain.

The protein in the N-terminal section; belongs to the glycosyl hydrolase 5 (cellulase A) family. This sequence in the C-terminal section; belongs to the glycosyl hydrolase 26 family.

The catalysed reaction is Endohydrolysis of (1-&gt;4)-beta-D-glucosidic linkages in cellulose, lichenin and cereal beta-D-glucans.. In terms of biological role, this enzyme catalyzes the endohydrolysis of 1,4-beta-glucosidic linkages in cellulose, lichenin and cereal beta-D-glucans. This is Endoglucanase H (celH) from Acetivibrio thermocellus (strain ATCC 27405 / DSM 1237 / JCM 9322 / NBRC 103400 / NCIMB 10682 / NRRL B-4536 / VPI 7372) (Clostridium thermocellum).